The chain runs to 368 residues: MNKTITALAILMASFAANASVLPETPVPFKSGTGVIDNDTVYIGLGSAGTAWYKLDTQAKDKRWTALAAFPGGPRDQATSAFIDGNLYVFGGIGKNSEGLTQVFNDVHKYNPKTNSWVKLMSHAPMGMAGHVTFVHNGKAYVTGGVNQNIFNGYFEDLNEAGKDSTAIDKINAYYFDKKAEDYFFNKFLLSFDPSTQQWSYAGESPWYGTAGAAVVNKGDKTWLINGEAKPGLRTDAVFELDFTGNNLKWNKLAPVASPDGVAGGFAGMSNDSLIFAGGAGFKGSRENYQNGKNYAHEGLKKSYSADIHLWHNGKWDKSGELSQGRAYGVSLLWNNSLLIIGGEAAGGKAVTDSVLISVKDNKVTVQN.

The signal sequence occupies residues 1–19 (MNKTITALAILMASFAANA). 7 Kelch repeats span residues 40-84 (TVYI…AFID), 86-137 (NLYV…FVHN), 139-173 (KAYVTGGVNQNIFNGYFEDLNEAGKDSTAIDKINA), 174-219 (YYFD…VNKG), 222-265 (TWLI…VAGG), 287-336 (ENYQ…LWNN), and 338-367 (LLIIGGEAAGGKAVTDSVLISVKDNKVTVQ). The active-site Proton acceptor is the glutamate 228.

The protein belongs to the NanM family. As to quaternary structure, homodimer.

It localises to the periplasm. The enzyme catalyses N-acetyl-alpha-neuraminate = N-acetyl-beta-neuraminate. In terms of biological role, converts alpha-N-acetylneuranimic acid (Neu5Ac) to the beta-anomer, accelerating the equilibrium between the alpha- and beta-anomers. Probably facilitates sialidase-negative bacteria to compete successfully for limited amounts of extracellular Neu5Ac, which is likely taken up in the beta-anomer. In addition, the rapid removal of sialic acid from solution might be advantageous to the bacterium to damp down host responses. This chain is N-acetylneuraminate epimerase 2, found in Escherichia coli O6:H1 (strain CFT073 / ATCC 700928 / UPEC).